A 149-amino-acid polypeptide reads, in one-letter code: Transcriptional repressor NrdR (149 aa).

A zinc finger spans residues 3–34 (CPFCSENDTKVIDSRLVADGHQVRRRRQCLAC). Residues 49–139 (PKVIKSNGNR…VYRSFEDIRE (91 aa)) form the ATP-cone domain.

This sequence belongs to the NrdR family. Zn(2+) is required as a cofactor.

Its function is as follows. Negatively regulates transcription of bacterial ribonucleotide reductase nrd genes and operons by binding to NrdR-boxes. The sequence is that of Transcriptional repressor NrdR from Vibrio vulnificus (strain YJ016).